A 498-amino-acid chain; its full sequence is MAELSTENLAQGQTTTEQTSEFASLLLQEFKPKTERAREAVETAVRTLAEHALEQTSLISNDAIKSIESIIAALDAKLTAQVNLIMHHADFQQLESAWRGLHYLVNNTETDEQLKIRVLNISKPELHKTLKKFKGTTWDQSPIFKKLYEEEYGQFGGEPYGCLVGDYYFDQSPPDVELLGEMAKISAAMHAPFISAASPTVMGMGSWQELSNPRDLTKIFTTPEYAGWRSLRESEDSRYIGLTMPRFLARLPYGAKTDPVEEFAFEEETDGADSSKYAWANSAYAMAVNINRSFKLYGWCSRIRGVESGGEVQGLPAHTFPTDDGGVDMKCPTEIAISDRREAELAKNGFMPLLHKKNTDFAAFIGAQSLQKPAEYDDPDATANANLAARLPYLFATCRFAHYLKCIVRDKIGSFKEKDEMQRWLQDWILNYVDGDPAHSTETTKAQHPLAAAEVVVEEVEGNPGYYNSKFFLRPHYQLEGLTVSLRLVSKLPSAKEA.

Forms a heterodimer with TssB1. Heterodimers assemble to form the sheath of the T6SS machinery. Interacts with TssA1.

Its function is as follows. Core component of the H1 type VI (H1-T6SS) secretion system that plays a role in the release of toxins targeting both eukaryotic and prokaryotic species. Forms the sheath of the structure by assembling into tubules together with TssB1 resulting in the stacking of cogwheel-like structures showing predominantly a 12-fold symmetry. The sheath contracts to provide the energy needed for effector delivery. The sequence is that of Type VI secretion system sheath protein TssC1 from Pseudomonas aeruginosa (strain ATCC 15692 / DSM 22644 / CIP 104116 / JCM 14847 / LMG 12228 / 1C / PRS 101 / PAO1).